We begin with the raw amino-acid sequence, 121 residues long: Large ribosomal subunit protein bL19 (121 aa).

This sequence belongs to the bacterial ribosomal protein bL19 family.

Functionally, this protein is located at the 30S-50S ribosomal subunit interface and may play a role in the structure and function of the aminoacyl-tRNA binding site. The protein is Large ribosomal subunit protein bL19 of Mesomycoplasma hyopneumoniae (strain 232) (Mycoplasma hyopneumoniae).